The following is a 541-amino-acid chain: Chaperonin GroEL (541 aa).

Residues 29–32 (TLGP), 86–90 (DGTTT), Gly-413, 476–478 (NAA), and Asp-492 contribute to the ATP site.

It belongs to the chaperonin (HSP60) family. As to quaternary structure, forms a cylinder of 14 subunits composed of two heptameric rings stacked back-to-back. Interacts with the co-chaperonin GroES.

It is found in the cytoplasm. The catalysed reaction is ATP + H2O + a folded polypeptide = ADP + phosphate + an unfolded polypeptide.. Functionally, together with its co-chaperonin GroES, plays an essential role in assisting protein folding. The GroEL-GroES system forms a nano-cage that allows encapsulation of the non-native substrate proteins and provides a physical environment optimized to promote and accelerate protein folding. This Rhodococcus hoagii (Corynebacterium equii) protein is Chaperonin GroEL.